Reading from the N-terminus, the 451-residue chain is UDP-N-acetylmuramoylalanine--D-glutamate ligase (451 aa).

Position 120–126 (120–126) interacts with ATP; the sequence is GSNGKTT.

This sequence belongs to the MurCDEF family.

It localises to the cytoplasm. The enzyme catalyses UDP-N-acetyl-alpha-D-muramoyl-L-alanine + D-glutamate + ATP = UDP-N-acetyl-alpha-D-muramoyl-L-alanyl-D-glutamate + ADP + phosphate + H(+). It participates in cell wall biogenesis; peptidoglycan biosynthesis. In terms of biological role, cell wall formation. Catalyzes the addition of glutamate to the nucleotide precursor UDP-N-acetylmuramoyl-L-alanine (UMA). In Bacillus velezensis (strain DSM 23117 / BGSC 10A6 / LMG 26770 / FZB42) (Bacillus amyloliquefaciens subsp. plantarum), this protein is UDP-N-acetylmuramoylalanine--D-glutamate ligase.